We begin with the raw amino-acid sequence, 383 residues long: ATP phosphoribosyltransferase regulatory subunit (383 aa).

The protein belongs to the class-II aminoacyl-tRNA synthetase family. HisZ subfamily. In terms of assembly, heteromultimer composed of HisG and HisZ subunits.

The protein resides in the cytoplasm. The protein operates within amino-acid biosynthesis; L-histidine biosynthesis; L-histidine from 5-phospho-alpha-D-ribose 1-diphosphate: step 1/9. In terms of biological role, required for the first step of histidine biosynthesis. May allow the feedback regulation of ATP phosphoribosyltransferase activity by histidine. The protein is ATP phosphoribosyltransferase regulatory subunit of Janthinobacterium sp. (strain Marseille) (Minibacterium massiliensis).